A 434-amino-acid polypeptide reads, in one-letter code: Serine protease HTRA2, mitochondrial (434 aa).

A disordered region spans residues 34 to 65 (YSNNTANITTDSSSSSNNNSNRNNKNDNNNED). Residues 35 to 60 (SNNTANITTDSSSSSNNNSNRNNKND) are compositionally biased toward low complexity. A helical membrane pass occupies residues 74–92 (LVRFFVPFSLGAVASSLVM). Residues 85–88 (AVAS) carry the IAP-binding motif. The segment at 151-314 (SNGSGFVIEQ…IPIDYVKVFL (164 aa)) is serine protease. Catalysis depends on charge relay system residues His-169, Asp-201, and Ser-278. The region spanning 337-424 (MGITMLTLTP…NMIIMRGVKQ (88 aa)) is the PDZ domain.

The protein belongs to the peptidase S1C family. As to quaternary structure, interacts with th/DIAP1 (via BIR 2 domain).

It localises to the mitochondrion intermembrane space. Its subcellular location is the mitochondrion membrane. The enzyme catalyses Cleavage of non-polar aliphatic amino-acids at the P1 position, with a preference for Val, Ile and Met. At the P2 and P3 positions, Arg is selected most strongly with a secondary preference for other hydrophilic residues.. Its function is as follows. Serine protease that shows proteolytic activity against a non-specific substrate beta-casein. Promotes or induces cell death either by direct binding to and inhibition of BIRC proteins (also called inhibitor of apoptosis proteins, IAPs), leading to an increase in caspase activity, or by a BIRC inhibition-independent, caspase-independent and serine protease activity-dependent mechanism. Can antagonize antiapoptotic activity of th/Diap1 by directly inducing the degradation of th/Diap1. This chain is Serine protease HTRA2, mitochondrial, found in Drosophila willistoni (Fruit fly).